The chain runs to 198 residues: Recombination protein RecR (198 aa).

A C4-type zinc finger spans residues 57–72; sequence CSVCGHITDKDPCYIC. Positions 80 to 175 constitute a Toprim domain; sequence SVLCVVQESK…KVTRIAHGLP (96 aa).

The protein belongs to the RecR family.

In terms of biological role, may play a role in DNA repair. It seems to be involved in an RecBC-independent recombinational process of DNA repair. It may act with RecF and RecO. The sequence is that of Recombination protein RecR from Listeria innocua serovar 6a (strain ATCC BAA-680 / CLIP 11262).